Consider the following 121-residue polypeptide: Neuromedin-B (121 aa).

A signal peptide spans 1–24; that stretch reads MTLRARGARLLGGLLFFTLLAAGA. Position 56 is a methionine amide (Met56). The propeptide occupies 60–121; the sequence is SLEPPNPSLL…RRLLVQTLEK (62 aa).

Belongs to the bombesin/neuromedin-B/ranatensin family. Higher expression in the central nervous system (CNS) than in peripheral tissues. Highest levels are found in the olfactory bulb. Relatively high levels in the CNS (including the cerebral cortex, cerebellum, spinal cord, medulla oblongata, midbrain, hypothalamus, hippocampus, and hypophysis) and in peripheral tissues such as the pancreas, adrenal gland, testis, ovary and cecum. Moderate levels are found in the rectum, heart and pons with low expression levels detected in the bone marrow and duodenum. Other tissues show no or low levels of expression.

Its subcellular location is the secreted. It localises to the cell projection. The protein resides in the neuron projection. In terms of biological role, stimulates smooth muscle contraction. Induces sighing by acting directly on the pre-Botzinger complex, a cluster of several thousand neurons in the ventrolateral medulla responsible for inspiration during respiratory activity. Contributes to the induction of sneezing following exposure to chemical irritants or allergens which causes release of NMB by nasal sensory neurons and activation of NMBR-expressing neurons in the sneeze-evoking region of the brainstem. These in turn activate neurons of the caudal ventral respiratory group, giving rise to the sneezing response. Contributes to induction of acute itch, possibly through activation of the NMBR receptor on dorsal root ganglion neurons. Increases expression of NMBR and steroidogenic mediators STAR, CYP11A1 and HSD3B1 in Leydig cells, induces secretion of testosterone by Leydig cells and also promotes Leydig cell proliferation. Plays a role in the innate immune response to influenza A virus infection by enhancing interferon alpha expression and reducing expression of IL6. Plays a role in CSF1-induced proliferation of osteoclast precursors by contributing to positive regulation of the expression of the CSF1 receptor CSF1R. The sequence is that of Neuromedin-B (NMB) from Sus scrofa (Pig).